The following is a 392-amino-acid chain: Large ribosomal subunit protein uL3 (392 aa).

Belongs to the universal ribosomal protein uL3 family.

The protein localises to the cytoplasm. Functionally, the L3 protein is a component of the large subunit of cytoplasmic ribosomes. The polypeptide is Large ribosomal subunit protein uL3 (rpl3) (Aspergillus fumigatus (strain ATCC MYA-4609 / CBS 101355 / FGSC A1100 / Af293) (Neosartorya fumigata)).